The following is a 405-amino-acid chain: Acetate kinase (405 aa).

Asn-7 contributes to the Mg(2+) binding site. Lys-14 provides a ligand contact to ATP. Substrate is bound at residue Arg-98. Asp-155 acts as the Proton donor/acceptor in catalysis. ATP is bound by residues 214–218 (HLGNG), 289–291 (DLR), and 337–341 (GVGEN). Glu-390 is a Mg(2+) binding site.

This sequence belongs to the acetokinase family. Homodimer. Mg(2+) serves as cofactor. Mn(2+) is required as a cofactor.

The protein resides in the cytoplasm. It carries out the reaction acetate + ATP = acetyl phosphate + ADP. It functions in the pathway metabolic intermediate biosynthesis; acetyl-CoA biosynthesis; acetyl-CoA from acetate: step 1/2. Catalyzes the formation of acetyl phosphate from acetate and ATP. Can also catalyze the reverse reaction. This is Acetate kinase from Gloeothece citriformis (strain PCC 7424) (Cyanothece sp. (strain PCC 7424)).